The sequence spans 374 residues: S-adenosylmethionine:tRNA ribosyltransferase-isomerase (374 aa).

The protein belongs to the QueA family. Monomer.

It is found in the cytoplasm. The enzyme catalyses 7-aminomethyl-7-carbaguanosine(34) in tRNA + S-adenosyl-L-methionine = epoxyqueuosine(34) in tRNA + adenine + L-methionine + 2 H(+). It functions in the pathway tRNA modification; tRNA-queuosine biosynthesis. In terms of biological role, transfers and isomerizes the ribose moiety from AdoMet to the 7-aminomethyl group of 7-deazaguanine (preQ1-tRNA) to give epoxyqueuosine (oQ-tRNA). The polypeptide is S-adenosylmethionine:tRNA ribosyltransferase-isomerase (Sorangium cellulosum (strain So ce56) (Polyangium cellulosum (strain So ce56))).